The chain runs to 115 residues: Cell division topological specificity factor (115 aa).

Residues 93–115 (QLKEPKNQSELDSPETEGTDQKS) form a disordered region. Acidic residues predominate over residues 104-115 (DSPETEGTDQKS).

The protein belongs to the MinE family.

Functionally, prevents the cell division inhibition by proteins MinC and MinD at internal division sites while permitting inhibition at polar sites. This ensures cell division at the proper site by restricting the formation of a division septum at the midpoint of the long axis of the cell. This chain is Cell division topological specificity factor, found in Prochlorococcus marinus (strain NATL1A).